A 290-amino-acid chain; its full sequence is 33 kDa chaperonin (290 aa).

Disulfide bonds link C235/C237 and C268/C271.

Belongs to the HSP33 family. Under oxidizing conditions two disulfide bonds are formed involving the reactive cysteines. Under reducing conditions zinc is bound to the reactive cysteines and the protein is inactive.

The protein resides in the cytoplasm. Redox regulated molecular chaperone. Protects both thermally unfolding and oxidatively damaged proteins from irreversible aggregation. Plays an important role in the bacterial defense system toward oxidative stress. This is 33 kDa chaperonin from Streptococcus pneumoniae (strain P1031).